Reading from the N-terminus, the 181-residue chain is ATP-dependent protease subunit HslV (181 aa).

Thr-7 is a catalytic residue. Ala-166, Cys-169, and Thr-172 together coordinate Na(+).

The protein belongs to the peptidase T1B family. HslV subfamily. In terms of assembly, a double ring-shaped homohexamer of HslV is capped on each side by a ring-shaped HslU homohexamer. The assembly of the HslU/HslV complex is dependent on binding of ATP.

The protein resides in the cytoplasm. It carries out the reaction ATP-dependent cleavage of peptide bonds with broad specificity.. With respect to regulation, allosterically activated by HslU binding. Its function is as follows. Protease subunit of a proteasome-like degradation complex believed to be a general protein degrading machinery. The protein is ATP-dependent protease subunit HslV of Anaeromyxobacter dehalogenans (strain 2CP-C).